We begin with the raw amino-acid sequence, 299 residues long: Protein FAM228A (299 aa).

Residues A135–S201 form a disordered region. Over residues K146–K159 the composition is skewed to basic and acidic residues. S264 is subject to Phosphoserine.

This sequence belongs to the FAM228 family.

This chain is Protein FAM228A (Fam228a), found in Mus musculus (Mouse).